Reading from the N-terminus, the 438-residue chain is Probable phosphoglucosamine mutase (438 aa).

Ser91 (phosphoserine intermediate) is an active-site residue. Mg(2+) is bound by residues Ser91, Asp228, Asp230, and Asp232. The residue at position 91 (Ser91) is a Phosphoserine.

This sequence belongs to the phosphohexose mutase family. It depends on Mg(2+) as a cofactor. Activated by phosphorylation.

It carries out the reaction alpha-D-glucosamine 1-phosphate = D-glucosamine 6-phosphate. Its function is as follows. Catalyzes the conversion of glucosamine-6-phosphate to glucosamine-1-phosphate. In Methanocella arvoryzae (strain DSM 22066 / NBRC 105507 / MRE50), this protein is Probable phosphoglucosamine mutase.